The sequence spans 117 residues: Large ribosomal subunit protein uL18 (117 aa).

Belongs to the universal ribosomal protein uL18 family. Part of the 50S ribosomal subunit; part of the 5S rRNA/L5/L18/L25 subcomplex. Contacts the 5S and 23S rRNAs.

This is one of the proteins that bind and probably mediate the attachment of the 5S RNA into the large ribosomal subunit, where it forms part of the central protuberance. The sequence is that of Large ribosomal subunit protein uL18 from Methylococcus capsulatus (strain ATCC 33009 / NCIMB 11132 / Bath).